The following is a 445-amino-acid chain: Proline--tRNA ligase (445 aa).

The protein belongs to the class-II aminoacyl-tRNA synthetase family. ProS type 2 subfamily. Homodimer.

It localises to the cytoplasm. It carries out the reaction tRNA(Pro) + L-proline + ATP = L-prolyl-tRNA(Pro) + AMP + diphosphate. Its function is as follows. Catalyzes the attachment of proline to tRNA(Pro) in a two-step reaction: proline is first activated by ATP to form Pro-AMP and then transferred to the acceptor end of tRNA(Pro). The sequence is that of Proline--tRNA ligase from Cereibacter sphaeroides (strain ATCC 17023 / DSM 158 / JCM 6121 / CCUG 31486 / LMG 2827 / NBRC 12203 / NCIMB 8253 / ATH 2.4.1.) (Rhodobacter sphaeroides).